Consider the following 173-residue polypeptide: Co-chaperone protein HscB homolog (173 aa).

A J domain is found at 5–77 (CHFAQFDLQP…PRRALYLLTL (73 aa)).

This sequence belongs to the HscB family. Interacts with HscA and stimulates its ATPase activity.

Co-chaperone involved in the maturation of iron-sulfur cluster-containing proteins. Seems to help targeting proteins to be folded toward HscA. This chain is Co-chaperone protein HscB homolog, found in Pseudomonas paraeruginosa (strain DSM 24068 / PA7) (Pseudomonas aeruginosa (strain PA7)).